The sequence spans 643 residues: Sodium-dependent nutrient amino acid transporter 1 (643 aa).

The segment at 1–38 (MELKGVQPSNGSPNGNGNGATNAASTEKTDAEKPTAER) is disordered. At 1–40 (MELKGVQPSNGSPNGNGNGATNAASTEKTDAEKPTAERTN) the chain is on the cytoplasmic side. Low complexity predominate over residues 8–26 (PSNGSPNGNGNGATNAAST). Basic and acidic residues predominate over residues 27-36 (EKTDAEKPTA). The next 3 membrane-spanning stretches (helical) occupy residues 41-61 (WGNGLEFLMSCISVSVGLGNV), 74-94 (GAFLIPYIIVLFLIGKPMYYL), and 111-131 (SVVPGFVGVGYGQAFGTICII). Asn185, Asn190, and Asn200 each carry an N-linked (GlcNAc...) asparagine glycan. 9 helical membrane passes run 231 to 251 (PDWKLTLALFVAWVVIFLVIM), 260 to 280 (AAYFLALFPYVVLFVLLIRAV), 309 to 329 (AVVQCFFSLAVGSGPIIMFAS), 343 to 363 (IVTTLDTLTSLLGGITIFAIL), 403 to 423 (LFSVLFFFMLFVLGIGSIVAL), 449 to 469 (VCGFLMGLVYVTPGGQWILTL), 476 to 496 (TYVVFILAIFELAGIVWVYGL), 518 to 538 (CWSFFTPVMMIIIFIYSMATI), and 554 to 574 (VAGWLLFAIGAAQFPLWGLWY).

This sequence belongs to the sodium:neurotransmitter symporter (SNF) (TC 2.A.22) family.

The protein resides in the membrane. Unusual broad substrate spectrum amino acid:sodium cotransporter that promotes absorption of the D isomers of essential amino acids. Neutral amino acids are the preferred substrates, especially methionine and phenylalanine. This Drosophila simulans (Fruit fly) protein is Sodium-dependent nutrient amino acid transporter 1.